The sequence spans 264 residues: Phosphoinositide-3-kinase-interacting protein 1 (264 aa).

The signal sequence occupies residues 1–21 (MLLAWVHTFLLSNMLLAEAYG). Topologically, residues 22–170 (SGGCFWDNGH…SKEKKDLGTL (149 aa)) are extracellular. The Kringle domain maps to 24 to 101 (GCFWDNGHLY…EKRPCEDVSC (78 aa)). Intrachain disulfides connect cysteine 25–cysteine 101, cysteine 46–cysteine 82, and cysteine 70–cysteine 96. A disordered region spans residues 94 to 129 (RPCEDVSCPETTSQAPPPSSAMELEEKSGAPGDKEA). The segment covering 117–129 (LEEKSGAPGDKEA) has biased composition (basic and acidic residues). The helical transmembrane segment at 171–191 (GYVLGITMMVIILAIGAGIIV) threads the bilayer. At 192–264 (GYTYKRGKDL…LTGQAGTPGA (73 aa)) the chain is on the cytoplasmic side.

Its subcellular location is the cell membrane. In terms of biological role, negative regulator of hepatic phosphatidylinositol 3-kinase (PI3K) activity. The polypeptide is Phosphoinositide-3-kinase-interacting protein 1 (Pik3ip1) (Mus musculus (Mouse)).